The primary structure comprises 363 residues: NADH-quinone oxidoreductase subunit H (363 aa).

The next 9 membrane-spanning stretches (helical) occupy residues 62–82, 94–114, 127–147, 166–186, 202–222, 239–257, 264–286, 293–313, and 339–359; these read GPMYVGMGLFQAFADVFKLLF, AIFVIAPLLTLAPSFAAWAVV, VGLLYLLAMTSLGVYGIILAG, VVSYEIAMGFALVGVMIAAGS, FFDWFLIPLFPLFIVYWVSGV, IVAGHMVEYSGSVFALFFL, ILVSFLISIFFLGGWLSPIQGWV, LIDWVWNGGWPWLLFKVLFFA, and FIPLTIVWIAVTALMVFSGVI.

This sequence belongs to the complex I subunit 1 family. In terms of assembly, NDH-1 is composed of 14 different subunits. Subunits NuoA, H, J, K, L, M, N constitute the membrane sector of the complex.

The protein localises to the cell inner membrane. The catalysed reaction is a quinone + NADH + 5 H(+)(in) = a quinol + NAD(+) + 4 H(+)(out). In terms of biological role, NDH-1 shuttles electrons from NADH, via FMN and iron-sulfur (Fe-S) centers, to quinones in the respiratory chain. The immediate electron acceptor for the enzyme in this species is believed to be ubiquinone. Couples the redox reaction to proton translocation (for every two electrons transferred, four hydrogen ions are translocated across the cytoplasmic membrane), and thus conserves the redox energy in a proton gradient. This subunit may bind ubiquinone. The protein is NADH-quinone oxidoreductase subunit H of Xylella fastidiosa (strain 9a5c).